The chain runs to 177 residues: Large ribosomal subunit protein uL6 (177 aa).

Belongs to the universal ribosomal protein uL6 family. Part of the 50S ribosomal subunit.

This protein binds to the 23S rRNA, and is important in its secondary structure. It is located near the subunit interface in the base of the L7/L12 stalk, and near the tRNA binding site of the peptidyltransferase center. The polypeptide is Large ribosomal subunit protein uL6 (Teredinibacter turnerae (strain ATCC 39867 / T7901)).